Consider the following 164-residue polypeptide: UPF0114 protein Spro_2386 (164 aa).

3 helical membrane passes run 15–35 (LLAP…IKFF), 53–73 (LVLT…LVMV), and 136–156 (LMWY…MGYL).

The protein belongs to the UPF0114 family.

Its subcellular location is the cell membrane. The chain is UPF0114 protein Spro_2386 from Serratia proteamaculans (strain 568).